Here is a 218-residue protein sequence, read N- to C-terminus: MESASPSATIRRRGVMLVLSSPSGAGKSTIARSLLENDHEFELSVSVTTRPRRPSEIEGVHYHFKTQRDFEMMRDGGDLLEWAEVHGNCYGTPRGPVERAIAGGRDMLFDIDWQGAAQLREKMPDDIVSVFILPPTMKELLARLTRRAEDTPEIIERRLRNAHHEIEQWRDYDYVVINDDLDRAFASVRAIVSAERLRHERRPGLEDFVAGLLAERPE.

Residues G14 to S193 enclose the Guanylate kinase-like domain. Position 21–28 (S21–S28) interacts with ATP.

The protein belongs to the guanylate kinase family.

It is found in the cytoplasm. It carries out the reaction GMP + ATP = GDP + ADP. Essential for recycling GMP and indirectly, cGMP. This chain is Guanylate kinase, found in Chelativorans sp. (strain BNC1).